We begin with the raw amino-acid sequence, 162 residues long: Ubiquitin-fold modifier-conjugating enzyme 1 (162 aa).

C115 (glycyl thioester intermediate) is an active-site residue.

It belongs to the ubiquitin-conjugating enzyme family. UFC1 subfamily. As to quaternary structure, interacts with uba-5. In terms of tissue distribution, expressed in the intestine.

Functionally, E2-like enzyme which forms an intermediate with ufm-1. The intermediate is formed via a thioester linkage. The polypeptide is Ubiquitin-fold modifier-conjugating enzyme 1 (Caenorhabditis elegans).